A 978-amino-acid chain; its full sequence is Regulator of MON1-CCZ1 complex homolog (978 aa).

Low complexity-rich tracts occupy residues 311–351 and 479–495; these read TSTP…MISS and NNNNNNNNNNNNNNNNN. Disordered regions lie at residues 311–363, 474–546, 558–665, and 703–727; these read TSTP…HKEQ, SINQ…NSKT, KQQQ…NNHV, and EKEKENDNNNNNTNNNTNNNNNNNI. Residues 496 to 515 are compositionally biased toward polar residues; the sequence is TAQTLNSTGNLSNSISIGGM. Low complexity predominate over residues 516-539; sequence NTSTDNLTTTTTTSSSISSSPSNS. The segment covering 582 to 591 has biased composition (gly residues); sequence GDGGSGGSGG. 2 stretches are compositionally biased toward low complexity: residues 592–663 and 710–727; these read SFYN…NNNN and NNNNNTNNNTNNNNNNNI. A Mic1 domain is found at 735–908; the sequence is KLELDSKYLI…HPSFDKYIKL (174 aa). A disordered region spans residues 955–978; sequence NNSSPTLRSSNSLNSSPRLQYSNN.

Belongs to the RMC1 family.

It localises to the lysosome membrane. The protein localises to the late endosome membrane. Functionally, may have a role in autophagy. This chain is Regulator of MON1-CCZ1 complex homolog, found in Dictyostelium discoideum (Social amoeba).